A 206-amino-acid chain; its full sequence is Large ribosomal subunit protein uL4 (206 aa).

Residues 42 to 93 (KKQQGTHKTKNRSEVSRTGAKMYKQKGTGRARHHSARAPQFRGGGKAHGPVV) form a disordered region. Over residues 64 to 77 (YKQKGTGRARHHSA) the composition is skewed to basic residues.

This sequence belongs to the universal ribosomal protein uL4 family. Part of the 50S ribosomal subunit.

One of the primary rRNA binding proteins, this protein initially binds near the 5'-end of the 23S rRNA. It is important during the early stages of 50S assembly. It makes multiple contacts with different domains of the 23S rRNA in the assembled 50S subunit and ribosome. In terms of biological role, forms part of the polypeptide exit tunnel. The chain is Large ribosomal subunit protein uL4 from Agrobacterium fabrum (strain C58 / ATCC 33970) (Agrobacterium tumefaciens (strain C58)).